The following is a 212-amino-acid chain: Leucyl/phenylalanyl-tRNA--protein transferase (212 aa).

It belongs to the L/F-transferase family.

It is found in the cytoplasm. The enzyme catalyses N-terminal L-lysyl-[protein] + L-leucyl-tRNA(Leu) = N-terminal L-leucyl-L-lysyl-[protein] + tRNA(Leu) + H(+). It catalyses the reaction N-terminal L-arginyl-[protein] + L-leucyl-tRNA(Leu) = N-terminal L-leucyl-L-arginyl-[protein] + tRNA(Leu) + H(+). It carries out the reaction L-phenylalanyl-tRNA(Phe) + an N-terminal L-alpha-aminoacyl-[protein] = an N-terminal L-phenylalanyl-L-alpha-aminoacyl-[protein] + tRNA(Phe). In terms of biological role, functions in the N-end rule pathway of protein degradation where it conjugates Leu, Phe and, less efficiently, Met from aminoacyl-tRNAs to the N-termini of proteins containing an N-terminal arginine or lysine. This chain is Leucyl/phenylalanyl-tRNA--protein transferase, found in Flavobacterium johnsoniae (strain ATCC 17061 / DSM 2064 / JCM 8514 / BCRC 14874 / CCUG 350202 / NBRC 14942 / NCIMB 11054 / UW101) (Cytophaga johnsonae).